Reading from the N-terminus, the 36-residue chain is Potassium channel toxin alpha-KTx 16.5 (36 aa).

Intrachain disulfides connect cysteine 7–cysteine 28, cysteine 13–cysteine 33, and cysteine 17–cysteine 35. The interval 26 to 33 is interaction with Ca(2+)-activated K(+) channels; the sequence is GKCQNKQC.

This sequence belongs to the short scorpion toxin superfamily. Potassium channel inhibitor family. Alpha-KTx 16 subfamily. In terms of tissue distribution, expressed by the venom gland.

The protein resides in the secreted. Functionally, augments responses to direct muscle stimulation probably by blocking calcium-activated potassium channels. The polypeptide is Potassium channel toxin alpha-KTx 16.5 (Leiurus hebraeus (Hebrew deathstalker scorpion)).